Consider the following 101-residue polypeptide: Small ribosomal subunit protein uS14 (101 aa).

Belongs to the universal ribosomal protein uS14 family. Part of the 30S ribosomal subunit. Contacts proteins S3 and S10.

Its function is as follows. Binds 16S rRNA, required for the assembly of 30S particles and may also be responsible for determining the conformation of the 16S rRNA at the A site. The protein is Small ribosomal subunit protein uS14 of Stenotrophomonas maltophilia (strain K279a).